A 115-amino-acid polypeptide reads, in one-letter code: Hydrogenase maturation factor HypA (115 aa).

H2 is a Ni(2+) binding site. Positions 73, 76, 89, and 92 each coordinate Zn(2+).

It belongs to the HypA/HybF family.

Its function is as follows. Involved in the maturation of [NiFe] hydrogenases. Required for nickel insertion into the metal center of the hydrogenase. The polypeptide is Hydrogenase maturation factor HypA (Polaromonas naphthalenivorans (strain CJ2)).